Reading from the N-terminus, the 244-residue chain is Protein DMP9 (244 aa).

The disordered stretch occupies residues 1 to 56 (MEKTEESVGIRVYTATPPQKPSPSPPSRSPKPVLISSLPSLPSGAAAGGGRGRKRR). Residues 18-29 (PQKPSPSPPSRS) show a composition bias toward pro residues. A compositionally biased stretch (low complexity) spans 30 to 45 (PKPVLISSLPSLPSGA). A run of 4 helical transmembrane segments spans residues 71-91 (MLVN…LPSI), 99-119 (GINT…CFFF), 173-193 (LTVN…AIAF), and 213-233 (VMES…LVFP).

Belongs to the plant DMP1 protein family. As to expression, restricted to flowers and pollen.

It is found in the endoplasmic reticulum membrane. The protein localises to the vacuole membrane. Functionally, involved in membrane remodeling. The sequence is that of Protein DMP9 from Arabidopsis thaliana (Mouse-ear cress).